Here is a 1048-residue protein sequence, read N- to C-terminus: Copper-dependent transcription factor 1 (1048 aa).

The segment at residues 1–40 (MVLINDKKFACEKCIKGHRVSACTHTDRPLFEVKKKGRPS) is a DNA-binding region (copper-fist). The Zn(2+) site is built by Cys11, Cys14, Cys23, and His25. Over residues 85 to 99 (ANESGGASATANTSA) the composition is skewed to low complexity. Disordered regions lie at residues 85–117 (ANES…PTFP) and 178–273 (HSGH…RPPV). Over residues 211 to 222 (TRNSPTSINSSE) the composition is skewed to polar residues. A CRM-I motif is present at residues 348 to 362 (CMCGDDCSCPGCATH). The CRM-II signature appears at 455–482 (CCGGKCGCPPGECACTKQCCGCCGECTC). 2 disordered regions span residues 506–702 (SSCG…PLNS) and 835–876 (GPSG…WKFP). 5 stretches are compositionally biased toward polar residues: residues 527 to 536 (QIPQSVSPTS), 550 to 565 (PVST…SFNT), 629 to 645 (GSMT…GVRR), 664 to 682 (SIQS…SNQI), and 692 to 702 (APSQMTAPLNS). Positions 835 to 845 (GPSGPSAIPAT) are enriched in low complexity. Polar residues predominate over residues 846 to 868 (NIPSRHTTPQASRPLTPPESSFT).

Its subcellular location is the nucleus. The protein localises to the cytoplasm. It localises to the cell cortex. Transcription factor that regulates copper acquisition and homeostasis, and which plays a central role in fungal pathogenesis during neurologic infection. The transcriptional regulation exerted by CUF1 is intrinsically complex since it acts as a dual sensor of copper levels, responsible for expression of a set of copper-specific copper transporters, CTR1 and CTR4, at low copper concentrations, and 2 metallothioneins, CMT1 and CMT2, at high copper concentrations. Positively regulates the expression of the copper acquisition factor BIM1 under copper-limiting conditions. Also positively regulates the expression of super oxide dismutase SOD2 isoform 2 during oxidative stress and copper-limiting conditions. Negatively regulates the expression of super oxide dismutase SOD1 during copper-limiting conditions. Also regulates ATM1, an ABC transporter with functions in the iron-sulfur clusters (ISC) export machinery, during copper stress. Another target of CUF1 is the gene encoding the laccase LAC1. Binds promoters of target genes at Cu-responsive elements (CuREs) that contain a variable A/T rich 5' region followed by the core consensus sequence 5'-G(G/C)CTC(A/G)-3'. Negatively regulates capsule biosynthesis, probably via modulating iron acquisition through the high-affinity iron uptake pathway. The polypeptide is Copper-dependent transcription factor 1 (Cryptococcus neoformans var. grubii serotype A (strain H99 / ATCC 208821 / CBS 10515 / FGSC 9487) (Filobasidiella neoformans var. grubii)).